Reading from the N-terminus, the 240-residue chain is MTTNPKPIYQRILLKLSGEALQGSEGFGIDAKVLDRMAQEVKELVELGVQVGLVIGGGNLFRGAGLAEAGMNRVVGDHMGMLATVMNGLAMRDALHRAYVNARVMSAIPLNGVCDSYNWAEAISQLRQGRVVIFAAGTGNPFFTTDSAACLRGIEIEADIVLKATKVDGVYTDDPVKNPDAVLCDKLGFQDVLEKELKVMDLAAFTLARDHKMPIRVFNMTKPGSLRRVVMGEQEGTLIS.

15–18 (KLSG) contacts ATP. An involved in allosteric activation by GTP region spans residues 23 to 28 (GSEGFG). G57 is a UMP binding site. 2 residues coordinate ATP: G58 and R62. UMP-binding positions include D77 and 138–145 (TGNPFFTT). Positions 165, 171, and 174 each coordinate ATP.

Belongs to the UMP kinase family. In terms of assembly, homohexamer.

It localises to the cytoplasm. It catalyses the reaction UMP + ATP = UDP + ADP. It functions in the pathway pyrimidine metabolism; CTP biosynthesis via de novo pathway; UDP from UMP (UMPK route): step 1/1. Its activity is regulated as follows. Allosterically activated by GTP. Inhibited by UTP. Its function is as follows. Catalyzes the reversible phosphorylation of UMP to UDP. The chain is Uridylate kinase from Photobacterium profundum (strain SS9).